We begin with the raw amino-acid sequence, 194 residues long: dITP/XTP pyrophosphatase (194 aa).

8–13 (TSNPGK) is a substrate binding site. Residues Glu38 and Asp67 each coordinate Mg(2+). The active-site Proton acceptor is the Asp67. Residues Ser68, 152 to 155 (FGYD), Lys175, and 180 to 181 (HR) each bind substrate.

It belongs to the HAM1 NTPase family. As to quaternary structure, homodimer. The cofactor is Mg(2+).

It carries out the reaction XTP + H2O = XMP + diphosphate + H(+). It catalyses the reaction dITP + H2O = dIMP + diphosphate + H(+). The enzyme catalyses ITP + H2O = IMP + diphosphate + H(+). In terms of biological role, pyrophosphatase that catalyzes the hydrolysis of nucleoside triphosphates to their monophosphate derivatives, with a high preference for the non-canonical purine nucleotides XTP (xanthosine triphosphate), dITP (deoxyinosine triphosphate) and ITP. Seems to function as a house-cleaning enzyme that removes non-canonical purine nucleotides from the nucleotide pool, thus preventing their incorporation into DNA/RNA and avoiding chromosomal lesions. In Legionella pneumophila (strain Paris), this protein is dITP/XTP pyrophosphatase.